We begin with the raw amino-acid sequence, 471 residues long: Nuclear receptor subfamily 0 group B member 1 (471 aa).

3 repeat units span residues 1–67 (MAGE…YRCC), 68–134 (FCGE…YRCC), and 135–201 (FCGE…YRCC). The segment at 1–253 (MAGEDHQWQG…QRVALKSPQV (253 aa)) is 4 X 67 AA tandem repeats. 3 short sequence motifs (LXXLL motif) span residues 13–17 (LYNML), 80–84 (LYNML), and 147–151 (LYSLL). The stretch at 202 to 253 (FCGEDHPRQSGILCNMPMSAKQTHVAPEAQPGAPWWDPSCAAQRVALKSPQV) is one 4; truncated repeat. An NR LBD domain is found at 210 to 470 (QSGILCNMPM…DMMLEMLCAK (261 aa)). An AF-2 motif motif is present at residues 462-467 (MMLEML).

Belongs to the nuclear hormone receptor family. NR0 subfamily. As to quaternary structure, homodimer. Interacts with NR5A1, NR5A2, NR0B2 and with COPS2. Interacts with ESRRB; represses ESRRB activity at the GATA6 promoter.

The protein resides in the nucleus. It localises to the cytoplasm. In terms of biological role, nuclear receptor that lacks a DNA-binding domain and acts as a corepressor that inhibits the transcriptional activity of other nuclear receptors through heterodimeric interactions. Component of a cascade required for the development of the hypothalamic-pituitary-adrenal-gonadal axis. May also have a role in the development of the embryo and in the maintenance of embryonic stem cell pluripotency. This chain is Nuclear receptor subfamily 0 group B member 1 (NR0B1), found in Sus scrofa (Pig).